Here is a 217-residue protein sequence, read N- to C-terminus: Meiotically up-regulated gene 37 protein (217 aa).

Functionally, has a role in meiosis. The protein is Meiotically up-regulated gene 37 protein (mug37) of Schizosaccharomyces pombe (strain 972 / ATCC 24843) (Fission yeast).